The chain runs to 347 residues: Phosphate acyltransferase (347 aa).

Belongs to the PlsX family. Homodimer. Probably interacts with PlsY.

The protein resides in the cytoplasm. The catalysed reaction is a fatty acyl-[ACP] + phosphate = an acyl phosphate + holo-[ACP]. The protein operates within lipid metabolism; phospholipid metabolism. Its function is as follows. Catalyzes the reversible formation of acyl-phosphate (acyl-PO(4)) from acyl-[acyl-carrier-protein] (acyl-ACP). This enzyme utilizes acyl-ACP as fatty acyl donor, but not acyl-CoA. The polypeptide is Phosphate acyltransferase (Rhizobium meliloti (strain 1021) (Ensifer meliloti)).